Consider the following 237-residue polypeptide: Dihydroceramide fatty acyl 2-hydroxylase FAH1 (237 aa).

The next 2 membrane-spanning stretches (helical) occupy residues Leu-50–Ile-70 and Leu-80–Val-100. Zn(2+) is bound by residues His-102, His-107, His-123, His-126, and His-127. 2 helical membrane-spanning segments follow: residues Val-137–Ile-157 and Pro-164–Leu-184. The Zn(2+) site is built by His-181, His-185, His-201, His-204, and His-205.

Belongs to the sterol desaturase family. In terms of assembly, interacts with CYTB5-A, CYTB5-B, CYTB5-C and CYTB5-D. Interacts indirectly with BI-1 via CYTB5-D. Zn(2+) is required as a cofactor. As to expression, expressed in leaves, roots, flowers and seeds.

It localises to the endoplasmic reticulum membrane. The enzyme catalyses an N-(1,2-saturated acyl)sphinganine + 2 Fe(II)-[cytochrome b5] + O2 + 2 H(+) = an N-[(2'R)-hydroxyacyl]sphinganine + 2 Fe(III)-[cytochrome b5] + H2O. Functionally, fatty acid 2-hydroxylase involved in the alpha-hydroxylation of sphingolipid-associated very long-chain fatty acids (VLCFA). Probably involved in the resistance response to oxidative stress. The chain is Dihydroceramide fatty acyl 2-hydroxylase FAH1 from Arabidopsis thaliana (Mouse-ear cress).